The chain runs to 572 residues: Formate--tetrahydrofolate ligase (572 aa).

81-88 (TPAGEGKT) provides a ligand contact to ATP.

This sequence belongs to the formate--tetrahydrofolate ligase family.

The enzyme catalyses (6S)-5,6,7,8-tetrahydrofolate + formate + ATP = (6R)-10-formyltetrahydrofolate + ADP + phosphate. It participates in one-carbon metabolism; tetrahydrofolate interconversion. The protein is Formate--tetrahydrofolate ligase of Granulibacter bethesdensis (strain ATCC BAA-1260 / CGDNIH1).